The following is a 144-amino-acid chain: uncharacterized protein (144 aa).

Residues 90-144 form a disordered region; it reads KKEYSALKKSGKIHKVGGSKSSGHRKTKKPKKSMKGGSKTKKLSEKQLMKELLAM. Residues 98 to 130 are compositionally biased toward basic residues; sequence KSGKIHKVGGSKSSGHRKTKKPKKSMKGGSKTK.

This is an uncharacterized protein from Sputnik virophage.